A 208-amino-acid polypeptide reads, in one-letter code: Uracil phosphoribosyltransferase (208 aa).

Residues arginine 77, arginine 102, and 128–136 (DPMLATGGT) each bind 5-phospho-alpha-D-ribose 1-diphosphate. Uracil-binding positions include isoleucine 191 and 196 to 198 (GDI). Residue aspartate 197 coordinates 5-phospho-alpha-D-ribose 1-diphosphate.

This sequence belongs to the UPRTase family. It depends on Mg(2+) as a cofactor.

The enzyme catalyses UMP + diphosphate = 5-phospho-alpha-D-ribose 1-diphosphate + uracil. The protein operates within pyrimidine metabolism; UMP biosynthesis via salvage pathway; UMP from uracil: step 1/1. Its activity is regulated as follows. Allosterically activated by GTP. In terms of biological role, catalyzes the conversion of uracil and 5-phospho-alpha-D-ribose 1-diphosphate (PRPP) to UMP and diphosphate. The sequence is that of Uracil phosphoribosyltransferase from Aquifex aeolicus (strain VF5).